The primary structure comprises 1057 residues: DNA-directed RNA polymerase subunit beta' (1057 aa).

4 residues coordinate Zn(2+): Cys-60, Cys-62, Cys-75, and Cys-78. The Mg(2+) site is built by Asp-449, Asp-451, and Asp-453. Zn(2+) is bound by residues Cys-822, Cys-896, Cys-903, and Cys-906.

It belongs to the RNA polymerase beta' chain family. In terms of assembly, the RNAP catalytic core consists of 2 alpha, 1 beta, 1 beta' and 1 omega subunit. When a sigma factor is associated with the core the holoenzyme is formed, which can initiate transcription. Mg(2+) serves as cofactor. It depends on Zn(2+) as a cofactor.

It catalyses the reaction RNA(n) + a ribonucleoside 5'-triphosphate = RNA(n+1) + diphosphate. Functionally, DNA-dependent RNA polymerase catalyzes the transcription of DNA into RNA using the four ribonucleoside triphosphates as substrates. The sequence is that of DNA-directed RNA polymerase subunit beta' from Staphylococcus aureus.